The sequence spans 476 residues: ATP synthase subunit beta, chloroplastic (476 aa).

155–162 (GGAGVGKT) contacts ATP.

It belongs to the ATPase alpha/beta chains family. In terms of assembly, F-type ATPases have 2 components, CF(1) - the catalytic core - and CF(0) - the membrane proton channel. CF(1) has five subunits: alpha(3), beta(3), gamma(1), delta(1), epsilon(1). CF(0) has four main subunits: a(1), b(1), b'(1) and c(9-12).

The protein localises to the plastid. The protein resides in the chloroplast thylakoid membrane. It catalyses the reaction ATP + H2O + 4 H(+)(in) = ADP + phosphate + 5 H(+)(out). In terms of biological role, produces ATP from ADP in the presence of a proton gradient across the membrane. The catalytic sites are hosted primarily by the beta subunits. The sequence is that of ATP synthase subunit beta, chloroplastic from Emiliania huxleyi (Coccolithophore).